We begin with the raw amino-acid sequence, 428 residues long: Serine--tRNA ligase (428 aa).

231–233 (TAE) is an L-serine binding site. 262 to 264 (RSE) contacts ATP. Position 285 (Glu-285) interacts with L-serine. Position 349 to 352 (349 to 352 (EISS)) interacts with ATP. Ser-385 lines the L-serine pocket.

This sequence belongs to the class-II aminoacyl-tRNA synthetase family. Type-1 seryl-tRNA synthetase subfamily. In terms of assembly, homodimer. The tRNA molecule binds across the dimer.

It is found in the cytoplasm. The enzyme catalyses tRNA(Ser) + L-serine + ATP = L-seryl-tRNA(Ser) + AMP + diphosphate + H(+). It catalyses the reaction tRNA(Sec) + L-serine + ATP = L-seryl-tRNA(Sec) + AMP + diphosphate + H(+). It functions in the pathway aminoacyl-tRNA biosynthesis; selenocysteinyl-tRNA(Sec) biosynthesis; L-seryl-tRNA(Sec) from L-serine and tRNA(Sec): step 1/1. Functionally, catalyzes the attachment of serine to tRNA(Ser). Is also able to aminoacylate tRNA(Sec) with serine, to form the misacylated tRNA L-seryl-tRNA(Sec), which will be further converted into selenocysteinyl-tRNA(Sec). This chain is Serine--tRNA ligase, found in Staphylococcus aureus (strain USA300).